A 62-amino-acid chain; its full sequence is Photosystem II reaction center protein Z (62 aa).

The next 2 membrane-spanning stretches (helical) occupy residues 8 to 28 and 41 to 61; these read SVFALITISFLLVIGVPVVLA and FSGASLWIGLVFLVGILNSLI.

It belongs to the PsbZ family. PSII is composed of 1 copy each of membrane proteins PsbA, PsbB, PsbC, PsbD, PsbE, PsbF, PsbH, PsbI, PsbJ, PsbK, PsbL, PsbM, PsbT, PsbY, PsbZ, Psb30/Ycf12, at least 3 peripheral proteins of the oxygen-evolving complex and a large number of cofactors. It forms dimeric complexes.

Its subcellular location is the plastid. It localises to the chloroplast thylakoid membrane. Functionally, may control the interaction of photosystem II (PSII) cores with the light-harvesting antenna, regulates electron flow through the 2 photosystem reaction centers. PSII is a light-driven water plastoquinone oxidoreductase, using light energy to abstract electrons from H(2)O, generating a proton gradient subsequently used for ATP formation. This Psilotum nudum (Whisk fern) protein is Photosystem II reaction center protein Z.